The chain runs to 462 residues: Histidine--tRNA ligase (462 aa).

This sequence belongs to the class-II aminoacyl-tRNA synthetase family. As to quaternary structure, homodimer.

Its subcellular location is the cytoplasm. The catalysed reaction is tRNA(His) + L-histidine + ATP = L-histidyl-tRNA(His) + AMP + diphosphate + H(+). This is Histidine--tRNA ligase from Trichormus variabilis (strain ATCC 29413 / PCC 7937) (Anabaena variabilis).